The chain runs to 274 residues: Urease accessory protein UreD (274 aa).

It belongs to the UreD family. In terms of assembly, ureD, UreF and UreG form a complex that acts as a GTP-hydrolysis-dependent molecular chaperone, activating the urease apoprotein by helping to assemble the nickel containing metallocenter of UreC. The UreE protein probably delivers the nickel.

Its subcellular location is the cytoplasm. In terms of biological role, required for maturation of urease via the functional incorporation of the urease nickel metallocenter. The polypeptide is Urease accessory protein UreD (Lachnoclostridium phytofermentans (strain ATCC 700394 / DSM 18823 / ISDg) (Clostridium phytofermentans)).